The chain runs to 38 residues: MQPILEKLYRAESMSQQESQQLFSAIVRGELEPSQLAA.

Belongs to the anthranilate phosphoribosyltransferase family. In terms of assembly, homodimer.

It carries out the reaction N-(5-phospho-beta-D-ribosyl)anthranilate + diphosphate = 5-phospho-alpha-D-ribose 1-diphosphate + anthranilate. The protein operates within amino-acid biosynthesis; L-tryptophan biosynthesis; L-tryptophan from chorismate: step 2/5. In terms of biological role, catalyzes the transfer of the phosphoribosyl group of 5-phosphorylribose-1-pyrophosphate (PRPP) to anthranilate to yield N-(5'-phosphoribosyl)-anthranilate (PRA). The sequence is that of Anthranilate phosphoribosyltransferase (trpD) from Serratia marcescens.